A 299-amino-acid chain; its full sequence is Diaminopimelate epimerase (299 aa).

Substrate contacts are provided by asparagine 11 and asparagine 63. The active-site Proton donor is the cysteine 72. Substrate contacts are provided by residues 73-74 (GN), asparagine 211, and 229-230 (ER). Cysteine 238 serves as the catalytic Proton acceptor. 239 to 240 (GT) is a substrate binding site.

It belongs to the diaminopimelate epimerase family. As to quaternary structure, homodimer.

The protein localises to the cytoplasm. The enzyme catalyses (2S,6S)-2,6-diaminopimelate = meso-2,6-diaminopimelate. Its pathway is amino-acid biosynthesis; L-lysine biosynthesis via DAP pathway; DL-2,6-diaminopimelate from LL-2,6-diaminopimelate: step 1/1. Functionally, catalyzes the stereoinversion of LL-2,6-diaminopimelate (L,L-DAP) to meso-diaminopimelate (meso-DAP), a precursor of L-lysine and an essential component of the bacterial peptidoglycan. This chain is Diaminopimelate epimerase, found in Natranaerobius thermophilus (strain ATCC BAA-1301 / DSM 18059 / JW/NM-WN-LF).